We begin with the raw amino-acid sequence, 438 residues long: sn-glycerol-3-phosphate-binding periplasmic protein UgpB (438 aa).

Positions methionine 1–alanine 23 are cleaved as a signal peptide. Sn-glycerol 3-phosphate contacts are provided by tyrosine 65, glutamate 89, serine 144, serine 270, glycine 307, tyrosine 346, and arginine 397.

It belongs to the bacterial solute-binding protein 1 family. As to quaternary structure, the complex is composed of two ATP-binding proteins (UgpC), two transmembrane proteins (UgpA and UgpE) and a solute-binding protein (UgpB).

Its subcellular location is the periplasm. Its function is as follows. Part of the ABC transporter complex UgpBAEC involved in sn-glycerol-3-phosphate (G3P) import. Binds G3P. This chain is sn-glycerol-3-phosphate-binding periplasmic protein UgpB (ugpB), found in Salmonella typhi.